The following is a 96-amino-acid chain: uncharacterized protein (96 aa).

Positions 1–28 are cleaved as a signal peptide; sequence MNKKAIVGIFMSILMAGLVGCAGSSDAQ.

This is an uncharacterized protein from Butyrivibrio fibrisolvens.